The primary structure comprises 153 residues: Fimbrial protein EcpC (153 aa).

A propeptide spans M1 to G8 (leader sequence). The residue at position 9 (F9) is an N-methylphenylalanine. A helical membrane pass occupies residues F9–L29. C130 and C143 are disulfide-bonded.

Belongs to the N-Me-Phe pilin family.

Its subcellular location is the fimbrium. The protein localises to the membrane. The polypeptide is Fimbrial protein EcpC (ecpC) (Eikenella corrodens).